Reading from the N-terminus, the 276-residue chain is Urease accessory protein UreD (276 aa).

It belongs to the UreD family. As to quaternary structure, ureD, UreF and UreG form a complex that acts as a GTP-hydrolysis-dependent molecular chaperone, activating the urease apoprotein by helping to assemble the nickel containing metallocenter of UreC. The UreE protein probably delivers the nickel.

The protein localises to the cytoplasm. Functionally, required for maturation of urease via the functional incorporation of the urease nickel metallocenter. The sequence is that of Urease accessory protein UreD from Albidiferax ferrireducens (strain ATCC BAA-621 / DSM 15236 / T118) (Rhodoferax ferrireducens).